Here is a 451-residue protein sequence, read N- to C-terminus: Tubulin alpha-1B chain (451 aa).

An MREC motif motif is present at residues Met-1–Cys-4. 4 residues coordinate GTP: Gly-10, Gln-11, Ala-12, and Gln-15. Position 40 is an N6,N6,N6-trimethyllysine; alternate (Lys-40). Lys-40 is subject to N6-acetyllysine; alternate. Ser-48 is subject to Phosphoserine. The GTP site is built by Glu-71, Ala-99, Ser-140, Gly-143, Gly-144, Thr-145, Gly-146, Thr-179, Glu-183, Asn-206, Tyr-224, and Asn-228. Mg(2+) is bound at residue Glu-71. Ser-232 carries the phosphoserine modification. Leu-252 contributes to the GTP binding site. Glu-254 is a catalytic residue. Position 282 is a 3'-nitrotyrosine (Tyr-282). Residue Lys-326 forms a Glycyl lysine isopeptide (Lys-Gly) (interchain with G-Cter in ubiquitin) linkage. Arg-339 carries the omega-N-methylarginine modification. Lys-370 participates in a covalent cross-link: Glycyl lysine isopeptide (Lys-Gly) (interchain with G-Cter in ubiquitin). A Phosphoserine modification is found at Ser-439. 5-glutamyl polyglutamate is present on residues Glu-443 and Glu-445. Position 451 is a 3'-nitrotyrosine (Tyr-451).

The protein belongs to the tubulin family. Heterodimer of alpha- and beta-tubulin. A typical microtubule is a hollow water-filled tube with an outer diameter of 25 nm and an inner diameter of 15 nM. Alpha-beta heterodimers associate head-to-tail to form protofilaments running lengthwise along the microtubule wall with the beta-tubulin subunit facing the microtubule plus end conferring a structural polarity. Microtubules usually have 13 protofilaments but different protofilament numbers can be found in some organisms and specialized cells. Interacts with gamma-tubulin; the interaction allows microtubules to nucleate from the gamma-tubulin ring complex (gTuRC). Nascent microtubule interacts (via alpha-tubulin MREC motif) with TTC5/STRAP; this interaction may result in tubulin mRNA-targeted degradation. Component of sperm flagellar doublet microtubules. Mg(2+) serves as cofactor. Some glutamate residues at the C-terminus are polyglycylated, resulting in polyglycine chains on the gamma-carboxyl group. Glycylation is mainly limited to tubulin incorporated into axonemes (cilia and flagella) whereas glutamylation is prevalent in neuronal cells, centrioles, axonemes, and the mitotic spindle. Both modifications can coexist on the same protein on adjacent residues, and lowering polyglycylation levels increases polyglutamylation, and reciprocally. Cilia and flagella glycylation is required for their stability and maintenance. Flagella glycylation controls sperm motility. Post-translationally, some glutamate residues at the C-terminus are polyglutamylated, resulting in polyglutamate chains on the gamma-carboxyl group. Polyglutamylation plays a key role in microtubule severing by spastin (SPAST). SPAST preferentially recognizes and acts on microtubules decorated with short polyglutamate tails: severing activity by SPAST increases as the number of glutamates per tubulin rises from one to eight, but decreases beyond this glutamylation threshold. Glutamylation is also involved in cilia motility. In terms of processing, acetylation of alpha chains at Lys-40 is located inside the microtubule lumen. This modification has been correlated with increased microtubule stability, intracellular transport and ciliary assembly. Methylation of alpha chains at Lys-40 is found in mitotic microtubules and is required for normal mitosis and cytokinesis contributing to genomic stability. Post-translationally, nitration of Tyr-451 is irreversible and interferes with normal dynein intracellular distribution. In terms of processing, undergoes a tyrosination/detyrosination cycle, the cyclic removal and re-addition of a C-terminal tyrosine residue by the enzymes tubulin tyrosine carboxypeptidase (MATCAP1, VASH1 or VASH2) and tubulin tyrosine ligase (TTL), respectively. Tyrosination promotes microtubule interaction with CAP-Gly domain-containing proteins such as CLIP1, CLIP2 and DCTN1. Tyrosination regulates the initiation of dynein-dynactin motility via interaction with DCTN1, which brings the dynein-dynactin complex into contact with microtubules. In neurons, tyrosinated tubulins mediate the initiation of retrograde vesicle transport. Post-translationally, detyrosination is involved in metaphase plate congression by guiding chromosomes during mitosis: detyrosination promotes interaction with CENPE, promoting pole-proximal transport of chromosomes toward the equator. Detyrosination increases microtubules-dependent mechanotransduction in dystrophic cardiac and skeletal muscle. In cardiomyocytes, detyrosinated microtubules are required to resist to contractile compression during contraction: detyrosination promotes association with desmin (DES) at force-generating sarcomeres, leading to buckled microtubules and mechanical resistance to contraction.

It is found in the cytoplasm. It localises to the cytoskeleton. The catalysed reaction is GTP + H2O = GDP + phosphate + H(+). Its function is as follows. Tubulin is the major constituent of microtubules, protein filaments consisting of alpha- and beta-tubulin heterodimers. Microtubules grow by the addition of GTP-tubulin dimers to the microtubule end, where a stabilizing cap forms. Below the cap, tubulin dimers are in GDP-bound state, owing to GTPase activity of alpha-tubulin. The chain is Tubulin alpha-1B chain (TUBA1B) from Pan troglodytes (Chimpanzee).